The chain runs to 95 residues: CRISPR-associated endoribonuclease Cas2 1 (95 aa).

Asp-8 is a Mg(2+) binding site.

It belongs to the CRISPR-associated endoribonuclease Cas2 protein family. Homodimer, forms a heterotetramer with a Cas1 homodimer. Mg(2+) serves as cofactor.

In terms of biological role, CRISPR (clustered regularly interspaced short palindromic repeat), is an adaptive immune system that provides protection against mobile genetic elements (viruses, transposable elements and conjugative plasmids). CRISPR clusters contain sequences complementary to antecedent mobile elements and target invading nucleic acids. CRISPR clusters are transcribed and processed into CRISPR RNA (crRNA). Functions as a ssRNA-specific endoribonuclease. Involved in the integration of spacer DNA into the CRISPR cassette. In Pyrobaculum aerophilum (strain ATCC 51768 / DSM 7523 / JCM 9630 / CIP 104966 / NBRC 100827 / IM2), this protein is CRISPR-associated endoribonuclease Cas2 1.